The primary structure comprises 1085 residues: Solute carrier family 12 member 4 (1085 aa).

Topologically, residues 1–119 are cytoplasmic; sequence MPHFTVVPVD…RRAAKAPSMG (119 aa). The residue at position 24 (S24) is a Phosphoserine. Residues 28–46 show a composition bias toward basic and acidic residues; it reads YGERAEREDPDGHGNHRES. The tract at residues 28-47 is disordered; that stretch reads YGERAEREDPDGHGNHRESS. Residues S47, S59, S81, and S88 each carry the phosphoserine modification. The discontinuously helical transmembrane segment at 120-141 threads the bilayer; that stretch reads TLMGVYLPCLQNIFGVILFLRL. Residues N131 and I132 each coordinate K(+). At 142–149 the chain is on the extracellular side; it reads TWMVGTAG. Residues 150–172 traverse the membrane as a helical segment; the sequence is VLQALLIVLICCCCTLLTAISMS. Topologically, residues 173–196 are cytoplasmic; sequence AIATNGVVPAGGSYFMISRSLGPE. The chain crosses the membrane as a helical span at residues 197 to 225; the sequence is FGGAVGLCFYLGTTFAAAMYILGAIEILL. Y216 provides a ligand contact to K(+). Over 226–248 the chain is Extracellular; sequence TYIAPPAAIFYPSGTHDTSNATL. N-linked (GlcNAc...) asparagine glycosylation occurs at N245. A run of 2 helical transmembrane segments spans residues 249-271 and 272-297; these read NNMRVYGTVFLSFMTLVVFVGVK and YVNKFASLFLACVIISILSIYAGGIK. Over 298–419 the chain is Extracellular; the sequence is SMFDPPVFPV…LYVVADIATS (122 aa). Residues C308 and C323 are joined by a disulfide bond. N-linked (GlcNAc...) asparagine glycosylation is found at N312, N331, and N347. An intrachain disulfide couples C343 to C353. Residues 420–440 traverse the membrane as a helical segment; it reads FTVLVGIFFPSVTGIMAGSNR. Residues P429 and T432 each coordinate K(+). Chloride-binding residues include G433, I434, and M435. Residues 441–450 lie on the Cytoplasmic side of the membrane; sequence SGDLRDAQKS. Residues 451 to 473 form a helical membrane-spanning segment; the sequence is IPVGTILAIVTTSLVYFSSVVLF. Topologically, residues 474-504 are extracellular; that stretch reads GACIEGVVLRDKYGDGVSRNLVVGTLAWPSP. A helical transmembrane segment spans residues 505–531; that stretch reads WVIVVGSFFSTCGAGLQSLTGAPRLLQ. Topologically, residues 532-554 are cytoplasmic; the sequence is AIAKDNIIPFLRVFGHGKANGEP. A run of 2 helical transmembrane segments spans residues 555-575 and 576-598; these read TWALLLTALIAELGILIASLD and MVAPILSMFFLMCYLFVNLACAV. Y589 serves as a coordination point for chloride. The Cytoplasmic portion of the chain corresponds to 599-612; the sequence is QTLLRTPNWRPRFK. The next 2 helical transmembrane spans lie at 613–635 and 636–651; these read YYHWALSFLGMSLCLALMFVSSW and YYALVAMLIAGMIYKY. At 652 to 1085 the chain is on the cytoplasmic side; sequence IEYQGAEKEW…GGREVITIYS (434 aa). Residues 665–681 form a scissor helix region; sequence IRGLSLSAARYALLRLE. ATP-binding residues include L697, K699, K707, Y708, and V730. The residue at position 734 (S734) is a Phosphoserine. 3 residues coordinate ATP: G794, W795, and Y797. 2 positions are modified to phosphoserine: S916 and S967. Residue T983 is modified to Phosphothreonine. At S1050 the chain carries Phosphoserine.

The protein belongs to the SLC12A transporter family. K/Cl co-transporter subfamily. Homodimer; adopts a domain-swap conformation at the scissor helices connecting the transmembrane domain and C-terminal domain. Heterodimer with other K-Cl cotransporters. Post-translationally, N-glycosylated. In terms of processing, phosphorylated, phosphorylation may regulate transporter activity.

Its subcellular location is the cell membrane. It catalyses the reaction K(+)(in) + chloride(in) = K(+)(out) + chloride(out). Inhibited by WNK3. Its function is as follows. Mediates electroneutral potassium-chloride cotransport when activated by cell swelling. May contribute to cell volume homeostasis in single cells. May be involved in the regulation of basolateral Cl(-) exit in NaCl absorbing epithelia. This chain is Solute carrier family 12 member 4 (SLC12A4), found in Oryctolagus cuniculus (Rabbit).